We begin with the raw amino-acid sequence, 313 residues long: FAM172 family protein homolog Y75B8A.31 (313 aa).

The tract at residues 293–313 (VKSENSKESDDEAPKSKKICV) is disordered. A compositionally biased stretch (basic and acidic residues) spans 296–307 (ENSKESDDEAPK).

The protein belongs to the FAM172 family.

This Caenorhabditis elegans protein is FAM172 family protein homolog Y75B8A.31.